The primary structure comprises 136 residues: Large ribosomal subunit protein uL16 (136 aa).

The protein belongs to the universal ribosomal protein uL16 family. As to quaternary structure, part of the 50S ribosomal subunit.

In terms of biological role, binds 23S rRNA and is also seen to make contacts with the A and possibly P site tRNAs. The protein is Large ribosomal subunit protein uL16 of Aggregatibacter actinomycetemcomitans (Actinobacillus actinomycetemcomitans).